Reading from the N-terminus, the 198-residue chain is UPF0312 protein PFL_5802 (198 aa).

An N-terminal signal peptide occupies residues 1-23; it reads MLKKTLAALAIGSAVLAAGQVMA.

The protein belongs to the UPF0312 family. Type 1 subfamily.

It is found in the periplasm. In Pseudomonas fluorescens (strain ATCC BAA-477 / NRRL B-23932 / Pf-5), this protein is UPF0312 protein PFL_5802.